Reading from the N-terminus, the 357-residue chain is DNA replication and repair protein RecF (357 aa).

30–37 (GANGSGKT) lines the ATP pocket.

This sequence belongs to the RecF family.

It localises to the cytoplasm. The RecF protein is involved in DNA metabolism; it is required for DNA replication and normal SOS inducibility. RecF binds preferentially to single-stranded, linear DNA. It also seems to bind ATP. This is DNA replication and repair protein RecF from Shigella boydii serotype 4 (strain Sb227).